Here is a 107-residue protein sequence, read N- to C-terminus: Parvalbumin beta (107 aa).

An N-acetylserine modification is found at Ser1. 2 consecutive EF-hand domains span residues 37–72 (KSLD…FSPS) and 76–107 (LTDA…MIKA). The Ca(2+) site is built by Asp50, Asp52, Ser54, Phe56, Glu58, Glu61, Asp89, Asp91, Asp93, Met95, and Glu100.

The protein belongs to the parvalbumin family.

In muscle, parvalbumin is thought to be involved in relaxation after contraction. It binds two calcium ions. This is Parvalbumin beta from Esox lucius (Northern pike).